We begin with the raw amino-acid sequence, 75 residues long: Small ribosomal subunit protein eS17 (75 aa).

The protein belongs to the eukaryotic ribosomal protein eS17 family.

This is Small ribosomal subunit protein eS17 from Thermoplasma volcanium (strain ATCC 51530 / DSM 4299 / JCM 9571 / NBRC 15438 / GSS1).